A 197-amino-acid polypeptide reads, in one-letter code: Isopentenyl-diphosphate Delta-isomerase (197 aa).

Histidine 41 and histidine 48 together coordinate Mn(2+). One can recognise a Nudix hydrolase domain in the interval 46 to 183; it reads QLHRAFSVFL…SWFMTVLDAA (138 aa). Cysteine 83 is a catalytic residue. Cysteine 83 provides a ligand contact to Mg(2+). Position 85 (histidine 85) interacts with Mn(2+). Glutamate 103 lines the Mg(2+) pocket. Residues glutamate 130 and glutamate 132 each contribute to the Mn(2+) site. Glutamate 132 is an active-site residue.

It belongs to the IPP isomerase type 1 family. It depends on Mg(2+) as a cofactor. The cofactor is Mn(2+).

The protein resides in the cytoplasm. The enzyme catalyses isopentenyl diphosphate = dimethylallyl diphosphate. Its pathway is isoprenoid biosynthesis; dimethylallyl diphosphate biosynthesis; dimethylallyl diphosphate from isopentenyl diphosphate: step 1/1. In terms of biological role, catalyzes the 1,3-allylic rearrangement of the homoallylic substrate isopentenyl (IPP) to its highly electrophilic allylic isomer, dimethylallyl diphosphate (DMAPP). The protein is Isopentenyl-diphosphate Delta-isomerase of Streptomyces avermitilis (strain ATCC 31267 / DSM 46492 / JCM 5070 / NBRC 14893 / NCIMB 12804 / NRRL 8165 / MA-4680).